Reading from the N-terminus, the 122-residue chain is UPF0102 protein Dred_2035 (122 aa).

Belongs to the UPF0102 family.

This Desulforamulus reducens (strain ATCC BAA-1160 / DSM 100696 / MI-1) (Desulfotomaculum reducens) protein is UPF0102 protein Dred_2035.